The primary structure comprises 359 residues: Peptide chain release factor 1 (359 aa).

Residue Q236 is modified to N5-methylglutamine.

The protein belongs to the prokaryotic/mitochondrial release factor family. Post-translationally, methylated by PrmC. Methylation increases the termination efficiency of RF1.

It is found in the cytoplasm. Peptide chain release factor 1 directs the termination of translation in response to the peptide chain termination codons UAG and UAA. This is Peptide chain release factor 1 from Streptococcus pyogenes serotype M3 (strain ATCC BAA-595 / MGAS315).